The chain runs to 150 residues: Small ribosomal subunit protein uS15 (150 aa).

A compositionally biased stretch (basic residues) spans 1–10 (MPHRSRHKRG). Positions 1 to 21 (MPHRSRHKRGSSGSVRPATKT) are disordered.

This sequence belongs to the universal ribosomal protein uS15 family. In terms of assembly, part of the 30S ribosomal subunit.

In Caldivirga maquilingensis (strain ATCC 700844 / DSM 13496 / JCM 10307 / IC-167), this protein is Small ribosomal subunit protein uS15.